Reading from the N-terminus, the 489-residue chain is Acetyl-coenzyme A carboxylase carboxyl transferase subunit beta, chloroplastic (489 aa).

The CoA carboxyltransferase N-terminal domain maps to 222–489 (LWVQCENCYG…FFPLNSNSIK (268 aa)). 4 residues coordinate Zn(2+): Cys226, Cys229, Cys245, and Cys248. The segment at 226 to 248 (CENCYGLNYKKFFRSKMNICEQC) adopts a C4-type zinc-finger fold.

It belongs to the AccD/PCCB family. In terms of assembly, acetyl-CoA carboxylase is a heterohexamer composed of biotin carboxyl carrier protein, biotin carboxylase and 2 subunits each of ACCase subunit alpha and ACCase plastid-coded subunit beta (accD). The cofactor is Zn(2+).

It localises to the plastid. The protein resides in the chloroplast stroma. It carries out the reaction N(6)-carboxybiotinyl-L-lysyl-[protein] + acetyl-CoA = N(6)-biotinyl-L-lysyl-[protein] + malonyl-CoA. It participates in lipid metabolism; malonyl-CoA biosynthesis; malonyl-CoA from acetyl-CoA: step 1/1. Component of the acetyl coenzyme A carboxylase (ACC) complex. Biotin carboxylase (BC) catalyzes the carboxylation of biotin on its carrier protein (BCCP) and then the CO(2) group is transferred by the transcarboxylase to acetyl-CoA to form malonyl-CoA. The sequence is that of Acetyl-coenzyme A carboxylase carboxyl transferase subunit beta, chloroplastic from Buxus microphylla (Littleleaf boxwood).